A 316-amino-acid polypeptide reads, in one-letter code: Acetyl-coenzyme A carboxylase carboxyl transferase subunit alpha (316 aa).

Residues 40–293 enclose the CoA carboxyltransferase C-terminal domain; that stretch reads LEKRSRDALR…GDLIAKTMKE (254 aa).

This sequence belongs to the AccA family. As to quaternary structure, acetyl-CoA carboxylase is a heterohexamer composed of biotin carboxyl carrier protein (AccB), biotin carboxylase (AccC) and two subunits each of ACCase subunit alpha (AccA) and ACCase subunit beta (AccD).

It is found in the cytoplasm. It carries out the reaction N(6)-carboxybiotinyl-L-lysyl-[protein] + acetyl-CoA = N(6)-biotinyl-L-lysyl-[protein] + malonyl-CoA. It participates in lipid metabolism; malonyl-CoA biosynthesis; malonyl-CoA from acetyl-CoA: step 1/1. Functionally, component of the acetyl coenzyme A carboxylase (ACC) complex. First, biotin carboxylase catalyzes the carboxylation of biotin on its carrier protein (BCCP) and then the CO(2) group is transferred by the carboxyltransferase to acetyl-CoA to form malonyl-CoA. The polypeptide is Acetyl-coenzyme A carboxylase carboxyl transferase subunit alpha (Mesorhizobium japonicum (strain LMG 29417 / CECT 9101 / MAFF 303099) (Mesorhizobium loti (strain MAFF 303099))).